We begin with the raw amino-acid sequence, 229 residues long: GTP-binding protein Di-Ras3 (229 aa).

GTP-binding positions include 44–51 (GTAGVGKS), 63–69 (RHEYLPT), 91–95 (DSKSG), 152–155 (NKSD), and 182–183 (AK). The Effector region motif lies at 66 to 74 (YLPTIENTY). A Cysteine methyl ester modification is found at C226. A lipid anchor (S-geranylgeranyl cysteine) is attached at C226. The propeptide at 227-229 (IIM) is removed in mature form.

Belongs to the small GTPase superfamily. Di-Ras family. In terms of tissue distribution, expressed in normal ovarian and breast epithelial cells but not in ovarian and breast cancers.

It is found in the cell membrane. In Homo sapiens (Human), this protein is GTP-binding protein Di-Ras3 (DIRAS3).